The following is a 65-amino-acid chain: Large ribosomal subunit protein uL29 (65 aa).

It belongs to the universal ribosomal protein uL29 family.

The polypeptide is Large ribosomal subunit protein uL29 (Mycoplasmopsis pulmonis (strain UAB CTIP) (Mycoplasma pulmonis)).